We begin with the raw amino-acid sequence, 103 residues long: Phosphoribosyl-ATP pyrophosphatase (103 aa).

This sequence belongs to the PRA-PH family.

The protein resides in the cytoplasm. The enzyme catalyses 1-(5-phospho-beta-D-ribosyl)-ATP + H2O = 1-(5-phospho-beta-D-ribosyl)-5'-AMP + diphosphate + H(+). It participates in amino-acid biosynthesis; L-histidine biosynthesis; L-histidine from 5-phospho-alpha-D-ribose 1-diphosphate: step 2/9. This is Phosphoribosyl-ATP pyrophosphatase from Listeria monocytogenes serotype 4b (strain CLIP80459).